The sequence spans 127 residues: Fluoride-specific ion channel FluC (127 aa).

4 consecutive transmembrane segments (helical) span residues 4 to 24 (SLLV…LLGM), 37 to 57 (TVVA…FLAA), 68 to 88 (LIIT…AETV), and 96 to 116 (LLWA…MTAA). 2 residues coordinate Na(+): glycine 75 and threonine 78.

Belongs to the fluoride channel Fluc/FEX (TC 1.A.43) family.

The protein resides in the cell inner membrane. It catalyses the reaction fluoride(in) = fluoride(out). Its activity is regulated as follows. Na(+) is not transported, but it plays an essential structural role and its presence is essential for fluoride channel function. Its function is as follows. Fluoride-specific ion channel. Important for reducing fluoride concentration in the cell, thus reducing its toxicity. In Pseudomonas syringae pv. maculicola, this protein is Fluoride-specific ion channel FluC.